The following is a 314-amino-acid chain: Elongation factor Ts (314 aa).

Residues 82–85 (TDFV) form an involved in Mg(2+) ion dislocation from EF-Tu region.

This sequence belongs to the EF-Ts family.

The protein resides in the cytoplasm. Functionally, associates with the EF-Tu.GDP complex and induces the exchange of GDP to GTP. It remains bound to the aminoacyl-tRNA.EF-Tu.GTP complex up to the GTP hydrolysis stage on the ribosome. This is Elongation factor Ts from Nostoc punctiforme (strain ATCC 29133 / PCC 73102).